We begin with the raw amino-acid sequence, 90 residues long: Probable dynein light chain 2, cytoplasmic (90 aa).

This sequence belongs to the dynein light chain family.

Its subcellular location is the cytoplasm. The protein resides in the cytoskeleton. Its function is as follows. Acts as one of several non-catalytic accessory components of a dynein complex. In Caenorhabditis elegans, this protein is Probable dynein light chain 2, cytoplasmic (dlc-2).